A 206-amino-acid chain; its full sequence is Small ribosomal subunit protein uS4 (206 aa).

Residues 96 to 156 (GRLDNVVYRM…EKSKKQARIK (61 aa)) form the S4 RNA-binding domain.

The protein belongs to the universal ribosomal protein uS4 family. As to quaternary structure, part of the 30S ribosomal subunit. Contacts protein S5. The interaction surface between S4 and S5 is involved in control of translational fidelity.

Functionally, one of the primary rRNA binding proteins, it binds directly to 16S rRNA where it nucleates assembly of the body of the 30S subunit. In terms of biological role, with S5 and S12 plays an important role in translational accuracy. The polypeptide is Small ribosomal subunit protein uS4 (Haemophilus influenzae (strain 86-028NP)).